We begin with the raw amino-acid sequence, 143 residues long: Large-conductance mechanosensitive channel (143 aa).

3 helical membrane-spanning segments follow: residues valine 16 to leucine 36, isoleucine 40 to isoleucine 60, and glycine 87 to valine 107.

It belongs to the MscL family. In terms of assembly, homopentamer.

Its subcellular location is the cell inner membrane. In terms of biological role, channel that opens in response to stretch forces in the membrane lipid bilayer. May participate in the regulation of osmotic pressure changes within the cell. This chain is Large-conductance mechanosensitive channel, found in Psychrobacter sp. (strain PRwf-1).